A 966-amino-acid chain; its full sequence is Translation initiation factor IF-2 (966 aa).

Composition is skewed to basic and acidic residues over residues 99-113, 123-183, 197-212, 220-249, and 266-277; these read KRDE…EAAD, EQAR…KAEE, DASR…RVAV, AADD…EAEA, and PSERKAEEKKAE. Residues 99–382 are disordered; the sequence is KRDEAGADQH…NFQAPTEPVV (284 aa). Positions 304–315 are enriched in low complexity; it reads AATTTTTTATTT. The segment covering 346–359 has biased composition (gly residues); the sequence is SSGGVGGWRGGPRG. The tr-type G domain occupies 466–635; the sequence is PRPPVVTVMG…LLQAEVLELK (170 aa). Positions 475 to 482 are G1; it reads GHVDHGKT. A GTP-binding site is contributed by 475 to 482; that stretch reads GHVDHGKT. A G2 region spans residues 500–504; it reads GITQH. The G3 stretch occupies residues 521 to 524; it reads DTPG. GTP-binding positions include 521-525 and 575-578; these read DTPGH and NKID. The tract at residues 575–578 is G4; the sequence is NKID. Positions 611 to 613 are G5; the sequence is SAK.

The protein belongs to the TRAFAC class translation factor GTPase superfamily. Classic translation factor GTPase family. IF-2 subfamily.

Its subcellular location is the cytoplasm. Functionally, one of the essential components for the initiation of protein synthesis. Protects formylmethionyl-tRNA from spontaneous hydrolysis and promotes its binding to the 30S ribosomal subunits. Also involved in the hydrolysis of GTP during the formation of the 70S ribosomal complex. The chain is Translation initiation factor IF-2 from Cupriavidus pinatubonensis (strain JMP 134 / LMG 1197) (Cupriavidus necator (strain JMP 134)).